Here is a 94-residue protein sequence, read N- to C-terminus: Neutrophil defensin 6 (94 aa).

The first 19 residues, 1-19 (MRTIAILAAILLFALLAQA), serve as a signal peptide directing secretion. The propeptide occupies 20 to 61 (KSLQETADEAATQEQPGEDDQDLAVSFEENGLSTLRASGSQA). 3 cysteine pairs are disulfide-bonded: C65/C93, C67/C82, and C72/C92.

It belongs to the alpha-defensin family.

It localises to the secreted. Its function is as follows. Defensins 6 and 7 have bacteriostatic activity against Gram-positive bacteria S.aureus and L.monocytogenes and Gram-negative bacterium E.coli and antifungal activity against C.neoformans. Defensin 7 has microbicidial activity against Gram-positive bacteria S.aureus and L.monocytogenes. This is Neutrophil defensin 6 from Macaca mulatta (Rhesus macaque).